The following is a 187-amino-acid chain: Peptidyl-tRNA hydrolase (187 aa).

Y18 is a tRNA binding site. H23 functions as the Proton acceptor in the catalytic mechanism. 3 residues coordinate tRNA: F65, N67, and N113.

It belongs to the PTH family. In terms of assembly, monomer.

It is found in the cytoplasm. It carries out the reaction an N-acyl-L-alpha-aminoacyl-tRNA + H2O = an N-acyl-L-amino acid + a tRNA + H(+). In terms of biological role, hydrolyzes ribosome-free peptidyl-tRNAs (with 1 or more amino acids incorporated), which drop off the ribosome during protein synthesis, or as a result of ribosome stalling. Functionally, catalyzes the release of premature peptidyl moieties from peptidyl-tRNA molecules trapped in stalled 50S ribosomal subunits, and thus maintains levels of free tRNAs and 50S ribosomes. The chain is Peptidyl-tRNA hydrolase from Coxiella burnetii (strain CbuG_Q212) (Coxiella burnetii (strain Q212)).